Consider the following 710-residue polypeptide: Exocyst complex component 5 (710 aa).

Residues 44 to 96 (DTFIQTIKDLKILQEKQQSKCERLEESLRQEKESHAKKIAKLQERHQTAIDVF) are a coiled coil.

This sequence belongs to the SEC10 family. In terms of assembly, the exocyst complex is composed of Sec3/Exoc1, Sec5/Exoc2, Sec6/Exoc3, Sec8/Exoc4, Sec10/Exoc5, Sec15/Exoc6, Exo70/Exoc7 and Exo84/Exoc8.

Functionally, component of the exocyst complex involved in the docking of exocytic vesicles with fusion sites on the plasma membrane. This is Exocyst complex component 5 from Drosophila melanogaster (Fruit fly).